Reading from the N-terminus, the 464-residue chain is Argininosuccinate lyase 2 (464 aa).

Belongs to the lyase 1 family. Argininosuccinate lyase subfamily.

The protein resides in the cytoplasm. It catalyses the reaction 2-(N(omega)-L-arginino)succinate = fumarate + L-arginine. The protein operates within amino-acid biosynthesis; L-arginine biosynthesis; L-arginine from L-ornithine and carbamoyl phosphate: step 3/3. The protein is Argininosuccinate lyase 2 of Pseudomonas fluorescens (strain Pf0-1).